The sequence spans 582 residues: Putative G-protein coupled receptor B0244.10 (582 aa).

A run of 4 helical transmembrane segments spans residues 25–45 (LYII…PLGL), 70–90 (ITFS…GFAV), 120–140 (WTFF…GLVI), and 159–179 (LLVQ…VFLT). The N-linked (GlcNAc...) asparagine glycan is linked to Asn190. The chain crosses the membrane as a helical span at residues 199-218 (LTLGKWFIALYRFLFQMTNI). N-linked (GlcNAc...) asparagine glycans are attached at residues Asn221 and Asn237. A run of 5 helical transmembrane segments spans residues 253 to 273 (SLMI…AVLV), 296 to 316 (YIFV…IIII), 329 to 349 (TFAF…SLLG), 377 to 397 (IYII…PFGL), and 421 to 441 (WLLF…LLFV). An N-linked (GlcNAc...) asparagine glycan is attached at Asn457. Transmembrane regions (helical) follow at residues 475 to 495 (TILV…AAFG) and 513 to 533 (LIFP…TFLL). An N-linked (GlcNAc...) asparagine glycan is attached at Asn538.

Belongs to the G-protein coupled receptor 1 family. B0244 subfamily.

The protein resides in the cell membrane. This Caenorhabditis elegans protein is Putative G-protein coupled receptor B0244.10.